Consider the following 115-residue polypeptide: Large ribosomal subunit protein bL20c (115 aa).

The protein belongs to the bacterial ribosomal protein bL20 family.

Its subcellular location is the plastid. It is found in the chloroplast. Its function is as follows. Binds directly to 23S ribosomal RNA and is necessary for the in vitro assembly process of the 50S ribosomal subunit. It is not involved in the protein synthesizing functions of that subunit. In Chlorella vulgaris (Green alga), this protein is Large ribosomal subunit protein bL20c (rpl20).